We begin with the raw amino-acid sequence, 158 residues long: 6,7-dimethyl-8-ribityllumazine synthase (158 aa).

5-amino-6-(D-ribitylamino)uracil is bound by residues phenylalanine 24, 58–60, and 82–84; these read AFE and AVI. 87 to 88 serves as a coordination point for (2S)-2-hydroxy-3-oxobutyl phosphate; sequence GT. The Proton donor role is filled by histidine 90. Phenylalanine 115 is a 5-amino-6-(D-ribitylamino)uracil binding site. A (2S)-2-hydroxy-3-oxobutyl phosphate-binding site is contributed by arginine 129.

The protein belongs to the DMRL synthase family. As to quaternary structure, forms an icosahedral capsid composed of 60 subunits, arranged as a dodecamer of pentamers.

It carries out the reaction (2S)-2-hydroxy-3-oxobutyl phosphate + 5-amino-6-(D-ribitylamino)uracil = 6,7-dimethyl-8-(1-D-ribityl)lumazine + phosphate + 2 H2O + H(+). The protein operates within cofactor biosynthesis; riboflavin biosynthesis; riboflavin from 2-hydroxy-3-oxobutyl phosphate and 5-amino-6-(D-ribitylamino)uracil: step 1/2. Functionally, catalyzes the formation of 6,7-dimethyl-8-ribityllumazine by condensation of 5-amino-6-(D-ribitylamino)uracil with 3,4-dihydroxy-2-butanone 4-phosphate. This is the penultimate step in the biosynthesis of riboflavin. This Pseudomonas putida (strain GB-1) protein is 6,7-dimethyl-8-ribityllumazine synthase.